A 200-amino-acid polypeptide reads, in one-letter code: NADH-quinone oxidoreductase subunit C (200 aa).

This sequence belongs to the complex I 30 kDa subunit family. As to quaternary structure, NDH-1 is composed of 14 different subunits. Subunits NuoB, C, D, E, F, and G constitute the peripheral sector of the complex.

It localises to the cell inner membrane. The enzyme catalyses a quinone + NADH + 5 H(+)(in) = a quinol + NAD(+) + 4 H(+)(out). Its function is as follows. NDH-1 shuttles electrons from NADH, via FMN and iron-sulfur (Fe-S) centers, to quinones in the respiratory chain. The immediate electron acceptor for the enzyme in this species is believed to be ubiquinone. Couples the redox reaction to proton translocation (for every two electrons transferred, four hydrogen ions are translocated across the cytoplasmic membrane), and thus conserves the redox energy in a proton gradient. This chain is NADH-quinone oxidoreductase subunit C, found in Rhizobium leguminosarum bv. trifolii (strain WSM2304).